We begin with the raw amino-acid sequence, 317 residues long: tRNA dimethylallyltransferase (317 aa).

19–26 (GPTASGKS) contacts ATP. 21 to 26 (TASGKS) is a binding site for substrate. Residues 44-47 (DSMQ) form an interaction with substrate tRNA region.

This sequence belongs to the IPP transferase family. Monomer. The cofactor is Mg(2+).

It carries out the reaction adenosine(37) in tRNA + dimethylallyl diphosphate = N(6)-dimethylallyladenosine(37) in tRNA + diphosphate. Its function is as follows. Catalyzes the transfer of a dimethylallyl group onto the adenine at position 37 in tRNAs that read codons beginning with uridine, leading to the formation of N6-(dimethylallyl)adenosine (i(6)A). This chain is tRNA dimethylallyltransferase, found in Methylorubrum populi (strain ATCC BAA-705 / NCIMB 13946 / BJ001) (Methylobacterium populi).